The chain runs to 565 residues: NAD-dependent malic enzyme (565 aa).

Tyr-104 functions as the Proton donor in the catalytic mechanism. Arg-157 lines the NAD(+) pocket. Lys-175 serves as the catalytic Proton acceptor. The a divalent metal cation site is built by Glu-246, Asp-247, and Asp-270. NAD(+) contacts are provided by Asp-270 and Asn-418.

It belongs to the malic enzymes family. As to quaternary structure, homotetramer. Requires Mg(2+) as cofactor. The cofactor is Mn(2+).

The enzyme catalyses (S)-malate + NAD(+) = pyruvate + CO2 + NADH. It catalyses the reaction oxaloacetate + H(+) = pyruvate + CO2. The polypeptide is NAD-dependent malic enzyme (Erwinia tasmaniensis (strain DSM 17950 / CFBP 7177 / CIP 109463 / NCPPB 4357 / Et1/99)).